The sequence spans 139 residues: Interleukin-5 (139 aa).

Residues 1–19 (MMKILVCLPLLTLYAGCVY) form the signal peptide. N-linked (GlcNAc...) asparagine glycans are attached at residues N48, N77, and N91.

This sequence belongs to the IL-5 family. As to quaternary structure, homodimer; disulfide-linked. Interacts with IL5RA. Interacts with CSF2RB.

The protein localises to the secreted. Homodimeric cytokine expressed predominantly by T-lymphocytes and NK cells that plays an important role in the survival, differentiation, and chemotaxis of eosinophils. Also acts on activated and resting B-cells to induce immunoglobulin production, growth, and differentiation. Mechanistically, exerts its biological effects through a receptor composed of IL5RA subunit and the cytokine receptor common subunit beta/CSF2RB. Binding to the receptor leads to activation of various kinases including LYN, SYK and JAK2 and thereby propagates signals through the RAS-MAPK and JAK-STAT5 pathways respectively. This chain is Interleukin-5 (IL5), found in Notamacropus eugenii (Tammar wallaby).